The following is a 235-amino-acid chain: Segregation and condensation protein A (235 aa).

Belongs to the ScpA family. In terms of assembly, component of a cohesin-like complex composed of ScpA, ScpB and the Smc homodimer, in which ScpA and ScpB bind to the head domain of Smc. The presence of the three proteins is required for the association of the complex with DNA.

The protein resides in the cytoplasm. In terms of biological role, participates in chromosomal partition during cell division. May act via the formation of a condensin-like complex containing Smc and ScpB that pull DNA away from mid-cell into both cell halves. The sequence is that of Segregation and condensation protein A from Streptococcus mutans serotype c (strain ATCC 700610 / UA159).